A 306-amino-acid polypeptide reads, in one-letter code: Tyrosine recombinase XerC (306 aa).

One can recognise a Core-binding (CB) domain in the interval 1 to 85; the sequence is MQQQLEQFLA…AIKSFFEYLQ (85 aa). The 184-residue stretch at 106–289 folds into the Tyr recombinase domain; the sequence is FLPKAITVAQ…SNDRAVKYDQ (184 aa). Residues arginine 147, lysine 171, histidine 241, arginine 244, and histidine 267 contribute to the active site. Catalysis depends on tyrosine 276, which acts as the O-(3'-phospho-DNA)-tyrosine intermediate.

The protein belongs to the 'phage' integrase family. XerC subfamily. As to quaternary structure, forms a cyclic heterotetrameric complex composed of two molecules of XerC and two molecules of XerD.

It is found in the cytoplasm. Functionally, site-specific tyrosine recombinase, which acts by catalyzing the cutting and rejoining of the recombining DNA molecules. The XerC-XerD complex is essential to convert dimers of the bacterial chromosome into monomers to permit their segregation at cell division. It also contributes to the segregational stability of plasmids. The protein is Tyrosine recombinase XerC of Herpetosiphon aurantiacus (strain ATCC 23779 / DSM 785 / 114-95).